We begin with the raw amino-acid sequence, 643 residues long: Threonine--tRNA ligase (643 aa).

A TGS domain is found at M1–T61. Residues D243–P534 form a catalytic region. Zn(2+)-binding residues include C334, H385, and H511.

This sequence belongs to the class-II aminoacyl-tRNA synthetase family. As to quaternary structure, homodimer. The cofactor is Zn(2+).

Its subcellular location is the cytoplasm. It catalyses the reaction tRNA(Thr) + L-threonine + ATP = L-threonyl-tRNA(Thr) + AMP + diphosphate + H(+). Functionally, catalyzes the attachment of threonine to tRNA(Thr) in a two-step reaction: L-threonine is first activated by ATP to form Thr-AMP and then transferred to the acceptor end of tRNA(Thr). Also edits incorrectly charged L-seryl-tRNA(Thr). The sequence is that of Threonine--tRNA ligase from Rhodospirillum rubrum (strain ATCC 11170 / ATH 1.1.1 / DSM 467 / LMG 4362 / NCIMB 8255 / S1).